Here is a 678-residue protein sequence, read N- to C-terminus: Transcriptional regulator CRZ1 (678 aa).

Over residues 1–21 (MSFSNGNMASYMTSSNGEEQS) the composition is skewed to polar residues. 2 disordered regions span residues 1–50 (MSFS…SHTF) and 159–195 (TPAD…NYSD). A compositionally biased stretch (low complexity) spans 34-47 (YRRNNFRNSSNSGS). Polar residues predominate over residues 166–195 (RPSLTNQFLSPRSNYDGTTRSSGIDSNYSD). Position 170 is a phosphothreonine (threonine 170). 3 positions are modified to phosphoserine: serine 175, serine 245, and serine 385. Residues 401–486 (KLKKSRRRSS…SNFNEDNNNN (86 aa)) form a disordered region. Low complexity predominate over residues 410–428 (SQTSNNSFTSRRSSRSRSI). Basic and acidic residues-rich tracts occupy residues 429 to 446 (SPDE…KLLE) and 457 to 467 (DNNRERYDNDS). Low complexity predominate over residues 472–486 (NTINSSNFNEDNNNN). C2H2-type zinc fingers lie at residues 569–591 (FACD…LRTH) and 597–619 (FICS…EDLH).

In terms of processing, phosphorylated. Dephosphorylated by calcineurin which leads to rapid translocation from the cytoplasm to the nucleus. Phosphorylated by the cyclin-CDK PHO80-PHO85.

It localises to the nucleus. The protein localises to the cytoplasm. Involved in the regulation of calcium ion homeostasis. Binds to the calcineurin-dependent response element. Transcriptionally regulates PMC1, PMR1, PMR2A and FKS2. The sequence is that of Transcriptional regulator CRZ1 (CRZ1) from Saccharomyces cerevisiae (strain ATCC 204508 / S288c) (Baker's yeast).